A 497-amino-acid chain; its full sequence is UPF0371 protein DIP2346 (497 aa).

It belongs to the UPF0371 family.

This chain is UPF0371 protein DIP2346, found in Corynebacterium diphtheriae (strain ATCC 700971 / NCTC 13129 / Biotype gravis).